The sequence spans 92 residues: Acylphosphatase (92 aa).

The Acylphosphatase-like domain occupies 5–92; the sequence is GVTIYVYGRV…EDIADFIVRH (88 aa). Catalysis depends on residues Arg-20 and Asn-38.

It belongs to the acylphosphatase family.

It catalyses the reaction an acyl phosphate + H2O = a carboxylate + phosphate + H(+). This is Acylphosphatase (acyP) from Photorhabdus laumondii subsp. laumondii (strain DSM 15139 / CIP 105565 / TT01) (Photorhabdus luminescens subsp. laumondii).